A 256-amino-acid polypeptide reads, in one-letter code: Thiazole synthase (256 aa).

Lys96 serves as the catalytic Schiff-base intermediate with DXP. 1-deoxy-D-xylulose 5-phosphate is bound by residues Gly157, 184–185, and 206–207; these read AG and NT.

The protein belongs to the ThiG family. Homotetramer. Forms heterodimers with either ThiH or ThiS.

It localises to the cytoplasm. The catalysed reaction is [ThiS sulfur-carrier protein]-C-terminal-Gly-aminoethanethioate + 2-iminoacetate + 1-deoxy-D-xylulose 5-phosphate = [ThiS sulfur-carrier protein]-C-terminal Gly-Gly + 2-[(2R,5Z)-2-carboxy-4-methylthiazol-5(2H)-ylidene]ethyl phosphate + 2 H2O + H(+). The protein operates within cofactor biosynthesis; thiamine diphosphate biosynthesis. Catalyzes the rearrangement of 1-deoxy-D-xylulose 5-phosphate (DXP) to produce the thiazole phosphate moiety of thiamine. Sulfur is provided by the thiocarboxylate moiety of the carrier protein ThiS. In vitro, sulfur can be provided by H(2)S. This chain is Thiazole synthase, found in Brucella melitensis biotype 2 (strain ATCC 23457).